The chain runs to 222 residues: ATP-dependent Clp protease proteolytic subunit 1 (222 aa).

The active-site Nucleophile is Ser121. Residue His146 is part of the active site.

The protein belongs to the peptidase S14 family. In terms of assembly, fourteen ClpP subunits assemble into 2 heptameric rings which stack back to back to give a disk-like structure with a central cavity, resembling the structure of eukaryotic proteasomes.

Its subcellular location is the cytoplasm. It carries out the reaction Hydrolysis of proteins to small peptides in the presence of ATP and magnesium. alpha-casein is the usual test substrate. In the absence of ATP, only oligopeptides shorter than five residues are hydrolyzed (such as succinyl-Leu-Tyr-|-NHMec, and Leu-Tyr-Leu-|-Tyr-Trp, in which cleavage of the -Tyr-|-Leu- and -Tyr-|-Trp bonds also occurs).. Functionally, cleaves peptides in various proteins in a process that requires ATP hydrolysis. Has a chymotrypsin-like activity. Plays a major role in the degradation of misfolded proteins. In Thermobifida fusca (strain YX), this protein is ATP-dependent Clp protease proteolytic subunit 1.